The following is a 1415-amino-acid chain: Bridge-like lipid transfer protein family member 3B (1415 aa).

In terms of domain architecture, Chorein N-terminal spans 3 to 94 (GLIKKQILKH…DKVIMEMSTC (92 aa)). Disordered stretches follow at residues 267-300 (STEQ…STTP) and 882-904 (KSPL…SEGV). Residues 275–300 (ASETTQSPTPPVSSQQVKNPQTSTTP) show a composition bias toward polar residues. The stretch at 1367–1404 (KAAGISKEQLVEENECLKQELAKTKMALAESHMERDRL) forms a coiled coil.

The protein resides in the cytoplasm. It localises to the cytosol. It is found in the early endosome. Tube-forming lipid transport protein which mediates the transfer of lipids between membranes at organelle contact sites. Required for retrograde traffic of vesicle clusters in the early endocytic pathway to the Golgi complex. This Xenopus laevis (African clawed frog) protein is Bridge-like lipid transfer protein family member 3B (bltp3b).